Consider the following 170-residue polypeptide: Non-classical export protein 102 (170 aa).

The Cytoplasmic portion of the chain corresponds to 1–11 (MLAIGDVILRA). One can recognise an MARVEL domain in the interval 6 to 141 (DVILRAFNFV…TFIFIASAIF (136 aa)). A helical transmembrane segment spans residues 12 to 32 (FNFVFLVIALGLTGSLAATTI). At 33-38 (TQHNPQ) the chain is on the extracellular side. A helical membrane pass occupies residues 39–61 (INFAVFAAAFGLLTSSFYGVFAY). Residues 62–76 (FVAAFAWPVILFVFD) lie on the Cytoplasmic side of the membrane. Residues 77-97 (FLNFVFTFAAATAIAAGIRAH) traverse the membrane as a helical segment. At 98-125 (SCSNQDYLDDNNIAQGSSGRCRKAQAST) the chain is on the extracellular side. A helical membrane pass occupies residues 126–146 (AFLYFSTFIFIASAIFSAISL). At 147-170 (SKGGLFGHSSRPAPRTGVPTMSQV) the chain is on the cytoplasmic side.

The protein belongs to the NCE102 family.

Its subcellular location is the cell membrane. In terms of biological role, involved in membrane organization. Involved in a novel pathway of export of proteins that lack a cleavable signal sequence. Non-classical export pathway also functions as an alternative clearance/detoxification pathway to eliminate damaged material, when the basic repair pathway is not sufficient. Regulates actin organization and subsequent morphogenesis and pathogenesis. The sequence is that of Non-classical export protein 102 from Candida albicans (strain SC5314 / ATCC MYA-2876) (Yeast).